A 1368-amino-acid polypeptide reads, in one-letter code: DNA-directed RNA polymerase subunit beta (1368 aa).

This sequence belongs to the RNA polymerase beta chain family. The RNAP catalytic core consists of 2 alpha, 1 beta, 1 beta' and 1 omega subunit. When a sigma factor is associated with the core the holoenzyme is formed, which can initiate transcription.

The enzyme catalyses RNA(n) + a ribonucleoside 5'-triphosphate = RNA(n+1) + diphosphate. In terms of biological role, DNA-dependent RNA polymerase catalyzes the transcription of DNA into RNA using the four ribonucleoside triphosphates as substrates. The sequence is that of DNA-directed RNA polymerase subunit beta from Cupriavidus necator (strain ATCC 17699 / DSM 428 / KCTC 22496 / NCIMB 10442 / H16 / Stanier 337) (Ralstonia eutropha).